Consider the following 383-residue polypeptide: Nuclear hormone receptor family member nhr-217 (383 aa).

A DNA-binding region (nuclear receptor) is located at residues 53–127; it reads IPACPVCDVP…AGLQRDYVRQ (75 aa). 2 NR C4-type zinc fingers span residues 56-77 and 93-109; these read CPVCDVPCRIEPHFGGIACAAC and CKREKLCRKARKSCRAC. Positions 172-383 constitute an NR LBD domain; it reads ILKVSNSSLF…KLYVQIGIPF (212 aa).

The protein belongs to the nuclear hormone receptor family.

Its subcellular location is the nucleus. Functionally, orphan nuclear receptor. The polypeptide is Nuclear hormone receptor family member nhr-217 (nhr-217) (Caenorhabditis elegans).